A 181-amino-acid chain; its full sequence is 3-isopropylmalate dehydratase small subunit (181 aa).

Belongs to the LeuD family. LeuD type 2 subfamily. In terms of assembly, heterodimer of LeuC and LeuD.

The enzyme catalyses (2R,3S)-3-isopropylmalate = (2S)-2-isopropylmalate. It functions in the pathway amino-acid biosynthesis; L-leucine biosynthesis; L-leucine from 3-methyl-2-oxobutanoate: step 2/4. Its function is as follows. Catalyzes the isomerization between 2-isopropylmalate and 3-isopropylmalate, via the formation of 2-isopropylmaleate. This chain is 3-isopropylmalate dehydratase small subunit, found in Deinococcus deserti (strain DSM 17065 / CIP 109153 / LMG 22923 / VCD115).